The sequence spans 531 residues: Apolipoprotein N-acyltransferase (531 aa).

The next 7 helical transmembrane spans lie at 8-28, 34-54, 69-89, 105-125, 136-156, 178-198, and 206-226; these read IILLSGVSRTFVGFLAGLLAV, FGIFAAAFVSFPVLVWLIDGV, PAAIGWSFGFGYFLGGLWWLG, LTVVGLPAVLGLFYALAVVIA, IAALALGFGIAEWLRGFLFTG, VVNLSTINMLAVFVFAAPALI, and AGLAIAAALFTAHVAFGFYRL. One can recognise a CN hydrolase domain in the interval 243–493; sequence VQPVIDQAKK…RGVIDTILPG (251 aa). The Proton acceptor role is filled by E287. K351 is a catalytic residue. C405 acts as the Nucleophile in catalysis. Residues 507–527 form a helical membrane-spanning segment; it reads IFWLTTGILFLVAAISRLGFN.

Belongs to the CN hydrolase family. Apolipoprotein N-acyltransferase subfamily.

It localises to the cell inner membrane. It carries out the reaction N-terminal S-1,2-diacyl-sn-glyceryl-L-cysteinyl-[lipoprotein] + a glycerophospholipid = N-acyl-S-1,2-diacyl-sn-glyceryl-L-cysteinyl-[lipoprotein] + a 2-acyl-sn-glycero-3-phospholipid + H(+). It participates in protein modification; lipoprotein biosynthesis (N-acyl transfer). Functionally, catalyzes the phospholipid dependent N-acylation of the N-terminal cysteine of apolipoprotein, the last step in lipoprotein maturation. This chain is Apolipoprotein N-acyltransferase, found in Rhizobium meliloti (strain 1021) (Ensifer meliloti).